Reading from the N-terminus, the 211-residue chain is Large ribosomal subunit protein uL4 (211 aa).

The tract at residues 44 to 90 (ERQGTHSTLTKGEVRGGGKKPWRQKHTGKARTGSTRNPHWTGGGVVF) is disordered. Basic residues predominate over residues 60–72 (GGKKPWRQKHTGK).

Belongs to the universal ribosomal protein uL4 family. As to quaternary structure, part of the 50S ribosomal subunit.

Functionally, one of the primary rRNA binding proteins, this protein initially binds near the 5'-end of the 23S rRNA. It is important during the early stages of 50S assembly. It makes multiple contacts with different domains of the 23S rRNA in the assembled 50S subunit and ribosome. In terms of biological role, forms part of the polypeptide exit tunnel. The sequence is that of Large ribosomal subunit protein uL4 from Ureaplasma parvum serovar 3 (strain ATCC 27815 / 27 / NCTC 11736).